Reading from the N-terminus, the 331-residue chain is tRNA uridine(34) hydroxylase (331 aa).

Positions 122-218 (KENRCLVLDV…YGQAVGTGKW (97 aa)) constitute a Rhodanese domain. Catalysis depends on Cys-178, which acts as the Cysteine persulfide intermediate.

The protein belongs to the TrhO family.

It catalyses the reaction uridine(34) in tRNA + AH2 + O2 = 5-hydroxyuridine(34) in tRNA + A + H2O. Functionally, catalyzes oxygen-dependent 5-hydroxyuridine (ho5U) modification at position 34 in tRNAs. This chain is tRNA uridine(34) hydroxylase, found in Chlamydia caviae (strain ATCC VR-813 / DSM 19441 / 03DC25 / GPIC) (Chlamydophila caviae).